The chain runs to 280 residues: 2-dehydro-3-deoxyphosphooctonate aldolase (280 aa).

The protein belongs to the KdsA family.

Its subcellular location is the cytoplasm. It carries out the reaction D-arabinose 5-phosphate + phosphoenolpyruvate + H2O = 3-deoxy-alpha-D-manno-2-octulosonate-8-phosphate + phosphate. Its pathway is carbohydrate biosynthesis; 3-deoxy-D-manno-octulosonate biosynthesis; 3-deoxy-D-manno-octulosonate from D-ribulose 5-phosphate: step 2/3. The protein operates within bacterial outer membrane biogenesis; lipopolysaccharide biosynthesis. This Coxiella burnetii (strain CbuG_Q212) (Coxiella burnetii (strain Q212)) protein is 2-dehydro-3-deoxyphosphooctonate aldolase.